The chain runs to 175 residues: 2-oxo-4-hydroxy-4-carboxy-5-ureidoimidazoline decarboxylase (175 aa).

His67 functions as the Proton donor in the catalytic mechanism. Residues Pro68, 84–88 (SQNEQ), and 119–123 (FVICA) each bind substrate. The short motif at 173-175 (TKL) is the Microbody targeting signal element.

It belongs to the OHCU decarboxylase family.

The protein resides in the peroxisome. The enzyme catalyses 5-hydroxy-2-oxo-4-ureido-2,5-dihydro-1H-imidazole-5-carboxylate + H(+) = (S)-allantoin + CO2. It participates in purine metabolism; urate degradation; (S)-allantoin from urate: step 3/3. Its function is as follows. Catalyzes the stereoselective decarboxylation of 2-oxo-4-hydroxy-4-carboxy-5-ureidoimidazoline (OHCU) to (S)-allantoin. The chain is 2-oxo-4-hydroxy-4-carboxy-5-ureidoimidazoline decarboxylase (urad) from Xenopus laevis (African clawed frog).